The primary structure comprises 213 residues: GrpE protein homolog, mitochondrial (213 aa).

The interval 35–55 (STEKQPEEATEQKATESSPEV) is disordered. Residues 38 to 55 (KQPEEATEQKATESSPEV) are compositionally biased toward basic and acidic residues.

It belongs to the GrpE family. Probable component of the PAM complex at least composed of a mitochondrial HSP70 protein, Roe1, TIM44, blp/TIM16 and TIM14.

The protein resides in the mitochondrion matrix. Its function is as follows. Essential component of the PAM complex, a complex required for the translocation of transit peptide-containing proteins from the inner membrane into the mitochondrial matrix in an ATP-dependent manner. Seems to control the nucleotide-dependent binding of mitochondrial HSP70 to substrate proteins. The sequence is that of GrpE protein homolog, mitochondrial (Roe1) from Drosophila melanogaster (Fruit fly).